The sequence spans 97 residues: Aspartyl/glutamyl-tRNA(Asn/Gln) amidotransferase subunit C (97 aa).

The protein belongs to the GatC family. As to quaternary structure, heterotrimer of A, B and C subunits.

The catalysed reaction is L-glutamyl-tRNA(Gln) + L-glutamine + ATP + H2O = L-glutaminyl-tRNA(Gln) + L-glutamate + ADP + phosphate + H(+). It carries out the reaction L-aspartyl-tRNA(Asn) + L-glutamine + ATP + H2O = L-asparaginyl-tRNA(Asn) + L-glutamate + ADP + phosphate + 2 H(+). Allows the formation of correctly charged Asn-tRNA(Asn) or Gln-tRNA(Gln) through the transamidation of misacylated Asp-tRNA(Asn) or Glu-tRNA(Gln) in organisms which lack either or both of asparaginyl-tRNA or glutaminyl-tRNA synthetases. The reaction takes place in the presence of glutamine and ATP through an activated phospho-Asp-tRNA(Asn) or phospho-Glu-tRNA(Gln). This is Aspartyl/glutamyl-tRNA(Asn/Gln) amidotransferase subunit C from Synechococcus sp. (strain JA-3-3Ab) (Cyanobacteria bacterium Yellowstone A-Prime).